The chain runs to 291 residues: MRTHDIPRSPLVGHKKNAAPDGIGASRACCPARENEPFKKGSTNSRGGGVEWSRSSTRRVRGSALERGMKQLKWWAVGPVLGICAGVWGAAHPVHADPWDTTAAGRSTIRLSAMGAVPLFQVDWCNSGRGDDRNANAQTNGHKYIYPAFSAALGFEHFVCRGLSLGIDASVQYHCSYPNNTYSPTTPYYYLAIPVALTAGYTVAFWRIRLPLTVGAGFNYQHYYTSTYYGLVLKAAAGCYFQLTEHWSLGVSATYSGVPRSCEKIIEEDRQQTNTRTAQFIAAGVDVRYHL.

The disordered stretch occupies residues 1 to 55; that stretch reads MRTHDIPRSPLVGHKKNAAPDGIGASRACCPARENEPFKKGSTNSRGGGVEWSRS. A run of 2 helical transmembrane segments spans residues 74-96 and 188-210; these read WWAVGPVLGICAGVWGAAHPVHA and YYYLAIPVALTAGYTVAFWRIRL.

This sequence to T.pallidum TP_0733.

The protein localises to the cell membrane. This is an uncharacterized protein from Treponema pallidum (strain Nichols).